The sequence spans 1068 residues: Huntingtin-interacting protein 1-related protein (1068 aa).

At Met-1 the chain carries N-acetylmethionine. In terms of domain architecture, ENTH spans 23–151; that stretch reads EREQFDKTQA…SFHLKHPQFP (129 aa). Residues 346–644 adopt a coiled-coil conformation; the sequence is GSMKDDRDLQ…LQDAVSKLDD (299 aa). A disordered region spans residues 582–610; that stretch reads EALSQEQQRSSQEKGELRGQLAEKESQEQ. Residues 592-608 are compositionally biased toward basic and acidic residues; sequence SQEKGELRGQLAEKESQ. Residues 771–1012 enclose the I/LWEQ domain; that stretch reads SLDVRQEELG…ELRKQHYVLA (242 aa). Residues 867-924 are important for actin binding; it reads RWTEGLISASKAVGWGATQLVESADKVVLHMGKYEELIVCSHEIAASTAQLVAASKVK. Residues 1011–1068 form a disordered region; that stretch reads LAGGMGTPSEEEPSRPSPAPRSGATKKPPLAQKPSIAPRTDNQLDKKDGVYPAQLVNY.

This sequence belongs to the SLA2 family. As to quaternary structure, homodimer. Interacts with actin; homodimerization promotes actin binding. Interacts with CLTB. Interacts with HIP1. Interacts (via ENTH and I/LWEQ domains) with BCL2L10. Widely expressed. Expressed at lower levels in skeletal muscle and heart. The level of expression does not change appreciably during development.

The protein resides in the cytoplasm. It localises to the perinuclear region. It is found in the endomembrane system. Its subcellular location is the cytoplasmic vesicle. The protein localises to the clathrin-coated vesicle membrane. Component of clathrin-coated pits and vesicles, that may link the endocytic machinery to the actin cytoskeleton. Binds 3-phosphoinositides (via ENTH domain). May act through the ENTH domain to promote cell survival by stabilizing receptor tyrosine kinases following ligand-induced endocytosis. The protein is Huntingtin-interacting protein 1-related protein (Hip1r) of Mus musculus (Mouse).